The sequence spans 115 residues: Large ribosomal subunit protein bL20 (115 aa).

This sequence belongs to the bacterial ribosomal protein bL20 family.

Functionally, binds directly to 23S ribosomal RNA and is necessary for the in vitro assembly process of the 50S ribosomal subunit. It is not involved in the protein synthesizing functions of that subunit. The protein is Large ribosomal subunit protein bL20 of Borrelia turicatae (strain 91E135).